The chain runs to 280 residues: Large ribosomal subunit protein uL2 (280 aa).

2 disordered regions span residues 1 to 59 (MAIR…GGHK) and 223 to 280 (GVVM…NKKR). 2 stretches are compositionally biased toward basic residues: residues 45-59 (VHGH…GGHK) and 269-280 (VRRRRSNKNKKR).

The protein belongs to the universal ribosomal protein uL2 family. In terms of assembly, part of the 50S ribosomal subunit. Forms a bridge to the 30S subunit in the 70S ribosome.

One of the primary rRNA binding proteins. Required for association of the 30S and 50S subunits to form the 70S ribosome, for tRNA binding and peptide bond formation. It has been suggested to have peptidyltransferase activity; this is somewhat controversial. Makes several contacts with the 16S rRNA in the 70S ribosome. In Corynebacterium jeikeium (strain K411), this protein is Large ribosomal subunit protein uL2.